Here is a 481-residue protein sequence, read N- to C-terminus: Ribulose bisphosphate carboxylase large chain (481 aa).

The propeptide occupies 1-2 (MS). N-acetylproline is present on Pro3. Lys14 is modified (N6,N6,N6-trimethyllysine). Substrate contacts are provided by Asn123 and Thr173. Lys175 (proton acceptor) is an active-site residue. Lys177 contributes to the substrate binding site. Mg(2+) is bound by residues Lys201, Asp203, and Glu204. Lys201 carries the N6-carboxylysine modification. The active-site Proton acceptor is His294. Arg295, His327, and Ser379 together coordinate substrate.

It belongs to the RuBisCO large chain family. Type I subfamily. In terms of assembly, heterohexadecamer of 8 large chains and 8 small chains; disulfide-linked. The disulfide link is formed within the large subunit homodimers. It depends on Mg(2+) as a cofactor. Post-translationally, the disulfide bond which can form in the large chain dimeric partners within the hexadecamer appears to be associated with oxidative stress and protein turnover.

The protein resides in the plastid. It catalyses the reaction 2 (2R)-3-phosphoglycerate + 2 H(+) = D-ribulose 1,5-bisphosphate + CO2 + H2O. It carries out the reaction D-ribulose 1,5-bisphosphate + O2 = 2-phosphoglycolate + (2R)-3-phosphoglycerate + 2 H(+). In terms of biological role, ruBisCO catalyzes two reactions: the carboxylation of D-ribulose 1,5-bisphosphate, the primary event in carbon dioxide fixation, as well as the oxidative fragmentation of the pentose substrate in the photorespiration process. Both reactions occur simultaneously and in competition at the same active site. This is Ribulose bisphosphate carboxylase large chain from Cuscuta obtusiflora (Peruvian dodder).